Consider the following 479-residue polypeptide: Glutamate--tRNA ligase (479 aa).

A 'HIGH' region motif is present at residues 11-21; it reads PSPTGYLHIGG. Zn(2+) is bound by residues C108, C110, C135, and E137. A 'KMSKS' region motif is present at residues 250-254; the sequence is KLSKR. Position 253 (K253) interacts with ATP.

The protein belongs to the class-I aminoacyl-tRNA synthetase family. Glutamate--tRNA ligase type 1 subfamily. Monomer. The cofactor is Zn(2+).

The protein localises to the cytoplasm. It catalyses the reaction tRNA(Glu) + L-glutamate + ATP = L-glutamyl-tRNA(Glu) + AMP + diphosphate. Functionally, catalyzes the attachment of glutamate to tRNA(Glu) in a two-step reaction: glutamate is first activated by ATP to form Glu-AMP and then transferred to the acceptor end of tRNA(Glu). The sequence is that of Glutamate--tRNA ligase from Myxococcus xanthus (strain DK1622).